Here is a 245-residue protein sequence, read N- to C-terminus: 8-amino-3,8-dideoxy-manno-octulosonate cytidylyltransferase (245 aa).

The protein belongs to the KdsB family.

Its subcellular location is the cytoplasm. The catalysed reaction is 8-amino-3,8-dideoxy-alpha-D-manno-octulosonate + CTP = CMP-8-amino-3,8-dideoxy-alpha-D-manno-oct-2-ulosonate + diphosphate. The protein operates within bacterial outer membrane biogenesis; lipopolysaccharide biosynthesis. In terms of biological role, activates KDO8N (a required 8-carbon sugar) for incorporation into bacterial lipopolysaccharide in the Shewanella genus. The sequence is that of 8-amino-3,8-dideoxy-manno-octulosonate cytidylyltransferase from Shewanella piezotolerans (strain WP3 / JCM 13877).